Consider the following 174-residue polypeptide: TPLGPARSLPQSFLLKCLEQVRKIQADGAELQERLCATHKLCHPEELVLLGHSLGIPQAPLSSCSSQSLQLTSCLDQLHGGLFLYQGLLQALAGISPELAPTLDTLQLDVTDFATNIWLQMEDLGVAPAVQPTQGTMPTFTSAFQRRAGGVLVASQLQRFLGLAYRGLRYLAEP.

Disulfide bonds link Cys36-Cys42 and Cys64-Cys74. Residue Thr133 is glycosylated (O-linked (GalNAc...) threonine).

It belongs to the IL-6 superfamily. As to quaternary structure, monomer. O-glycosylated.

The protein localises to the secreted. Functionally, granulocyte/macrophage colony-stimulating factors are cytokines that act in hematopoiesis by controlling the production, differentiation, and function of 2 related white cell populations of the blood, the granulocytes and the monocytes-macrophages. This CSF induces granulocytes. The sequence is that of Granulocyte colony-stimulating factor (CSF3) from Ovis aries (Sheep).